The primary structure comprises 364 residues: MTLTAERHDTAQPENAGVFERTDFPTDTAHEQVTFFQDPATGLKAIVAIHDTTLGPALGGTRFYPYADEAAALKDVLRLSRGMTYKSAIAGVDLGGGKAVIIGDPATGKSEALLEAYARFVQTLGGRYITAGDVGTNSDDLDVMGRATDYVVGRNTSAGGSGDSAPMTALGVFQGMRAAAQAKWGTASLAGRTVGVEGTGKVGYQLIKLLLADGASVVATDVNAAALDRVARDFPEVKIASSVIGQELDVYAPCAMGATLTDESVAAITAQVICGAANNQLAHPAVEHDLGERGITWVPDYVANGGGLIQVAGERLGTSADDVRAQVEKIFATVVQILDVAKRDGILAGAAADAVAEARIAAAR.

Arg62 provides a ligand contact to NAD(+). L-phenylalanine is bound at residue Lys86. Lys98 (proton donor/acceptor) is an active-site residue. NAD(+)-binding positions include Asp133, Ser164, Thr168, 255–256 (AM), and 276–278 (AAN). Asn278 is a binding site for L-phenylalanine.

Belongs to the Glu/Leu/Phe/Val dehydrogenases family.

The catalysed reaction is L-phenylalanine + NAD(+) + H2O = 3-phenylpyruvate + NH4(+) + NADH + H(+). Its pathway is amino-acid biosynthesis; L-phenylalanine biosynthesis; L-phenylalanine from phenylpyruvate (PDH route): step 1/1. Catalyzes the reversible NAD(+)-dependent oxidative deamination of L-phenylalanine to phenylpyruvate. This chain is Phenylalanine dehydrogenase, found in Rhodococcus jostii (strain RHA1).